The following is a 391-amino-acid chain: tRNA-specific 2-thiouridylase MnmA (391 aa).

Residues 9 to 16 (GMSGGVDS) and Met-35 contribute to the ATP site. The tract at residues 95–97 (NPD) is interaction with target base in tRNA. Cys-100 functions as the Nucleophile in the catalytic mechanism. A disulfide bridge connects residues Cys-100 and Cys-196. Gly-124 contacts ATP. The interval 146–148 (KDQ) is interaction with tRNA. Cys-196 serves as the catalytic Cysteine persulfide intermediate. The interval 308 to 309 (RY) is interaction with tRNA. Polar residues predominate over residues 372-382 (TGQPGQATSTG). A disordered region spans residues 372–391 (TGQPGQATSTGHAPALAEAR).

The protein belongs to the MnmA/TRMU family.

The protein resides in the cytoplasm. It carries out the reaction S-sulfanyl-L-cysteinyl-[protein] + uridine(34) in tRNA + AH2 + ATP = 2-thiouridine(34) in tRNA + L-cysteinyl-[protein] + A + AMP + diphosphate + H(+). Its function is as follows. Catalyzes the 2-thiolation of uridine at the wobble position (U34) of tRNA, leading to the formation of s(2)U34. This Burkholderia cenocepacia (strain ATCC BAA-245 / DSM 16553 / LMG 16656 / NCTC 13227 / J2315 / CF5610) (Burkholderia cepacia (strain J2315)) protein is tRNA-specific 2-thiouridylase MnmA.